A 151-amino-acid chain; its full sequence is Chaperonin GroEL (151 aa).

41–45 lines the ATP pocket; sequence DGTTT.

It belongs to the chaperonin (HSP60) family. In terms of assembly, forms a cylinder of 14 subunits composed of two heptameric rings stacked back-to-back. Interacts with the co-chaperonin GroES.

It localises to the cytoplasm. It catalyses the reaction ATP + H2O + a folded polypeptide = ADP + phosphate + an unfolded polypeptide.. In terms of biological role, together with its co-chaperonin GroES, plays an essential role in assisting protein folding. The GroEL-GroES system forms a nano-cage that allows encapsulation of the non-native substrate proteins and provides a physical environment optimized to promote and accelerate protein folding. This chain is Chaperonin GroEL, found in Mycolicibacterium fortuitum (Mycobacterium fortuitum).